A 36-amino-acid chain; its full sequence is Photosystem I reaction center subunit VIII (36 aa).

The helical transmembrane segment at 8-28 threads the bilayer; the sequence is SVLVPLVGLIFPAMAMASLFL.

This sequence belongs to the PsaI family.

It is found in the plastid. Its subcellular location is the chloroplast thylakoid membrane. Its function is as follows. May help in the organization of the PsaL subunit. This is Photosystem I reaction center subunit VIII from Daucus carota (Wild carrot).